The primary structure comprises 577 residues: Calcium-dependent protein kinase 22 (577 aa).

Residue G2 is the site of N-myristoyl glycine attachment. Residues 105-368 (YRLGAELGRG…AKEVLEHPWL (264 aa)) form the Protein kinase domain. ATP is bound by residues 111–119 (LGRGEFGVT) and K134. D234 serves as the catalytic Proton acceptor. The tract at residues 374-404 (APNVSLGEIVRSRLMQFSAMNKFKKKALGVV) is autoinhibitory domain. EF-hand domains lie at 411 to 446 (EEMD…NGHP), 447 to 482 (VPET…IKKM), 483 to 518 (SNEE…ELGP), and 520 to 553 (EQVV…GSDW). Ca(2+) contacts are provided by D424, D426, S428, N430, D435, D460, D462, N464, T466, E471, D496, D498, N500, E507, D531, D533, D535, R537, and E542.

Belongs to the protein kinase superfamily. Ser/Thr protein kinase family. CDPK subfamily.

Its subcellular location is the membrane. The catalysed reaction is L-seryl-[protein] + ATP = O-phospho-L-seryl-[protein] + ADP + H(+). The enzyme catalyses L-threonyl-[protein] + ATP = O-phospho-L-threonyl-[protein] + ADP + H(+). With respect to regulation, activated by calcium. Autophosphorylation may play an important role in the regulation of the kinase activity. Functionally, may play a role in signal transduction pathways that involve calcium as a second messenger. This is Calcium-dependent protein kinase 22 from Oryza sativa subsp. japonica (Rice).